A 318-amino-acid chain; its full sequence is NADH-ubiquinone oxidoreductase chain 1 (318 aa).

9 consecutive transmembrane segments (helical) span residues 2–22, 37–57, 69–89, 100–120, 136–156, 171–191, 231–251, 253–273, and 293–313; these read FLMNILCLVIPILLAMAFLTL, PNIVGPYGLLQPIADAIKLFI, LMFTLAPTLAFTLALSLWIPM, LGVLFILALSSLAVYSILWSG, VAQTISYEVTLAIILLSVMMM, HMWLILPLWPLAMMWFISTLA, IIMMNALTATLFLGAFHNPLF, ELFTVNFITKTLILTAIFLWV, and FLPLTLALCMLHVSIPALSAG.

The protein belongs to the complex I subunit 1 family. In terms of assembly, core subunit of respiratory chain NADH dehydrogenase (Complex I) which is composed of 45 different subunits.

It localises to the mitochondrion inner membrane. It carries out the reaction a ubiquinone + NADH + 5 H(+)(in) = a ubiquinol + NAD(+) + 4 H(+)(out). In terms of biological role, core subunit of the mitochondrial membrane respiratory chain NADH dehydrogenase (Complex I) which catalyzes electron transfer from NADH through the respiratory chain, using ubiquinone as an electron acceptor. Essential for the catalytic activity and assembly of complex I. This is NADH-ubiquinone oxidoreductase chain 1 (MT-ND1) from Zaedyus pichiy (Pichi).